Here is a 181-residue protein sequence, read N- to C-terminus: Ribosome maturation factor RimM (181 aa).

Residues 98 to 177 (EGEFFYCDLI…KITTHNAKTL (80 aa)) enclose the PRC barrel domain.

It belongs to the RimM family. In terms of assembly, binds ribosomal protein uS19.

Its subcellular location is the cytoplasm. Its function is as follows. An accessory protein needed during the final step in the assembly of 30S ribosomal subunit, possibly for assembly of the head region. Essential for efficient processing of 16S rRNA. May be needed both before and after RbfA during the maturation of 16S rRNA. It has affinity for free ribosomal 30S subunits but not for 70S ribosomes. The protein is Ribosome maturation factor RimM of Helicobacter pylori (strain J99 / ATCC 700824) (Campylobacter pylori J99).